Consider the following 1131-residue polypeptide: Plasma membrane ATPase (1131 aa).

The next 6 membrane-spanning stretches (helical) occupy residues 77 to 97, 98 to 118, 151 to 171, 231 to 251, 265 to 285, and 305 to 325; these read PVLVFLGYMWNPLAWAMEAAA, IISIALLDVADFVLIVGLLLI, GAIVTIDAVNLVPGDVILIRL, AVVYATGVNTFFGRAAALISG, MSAICIVTILLWVVVELAVQF, and MLVVLVGGIPIAMPTVLSVTL. Aspartate 357 acts as the 4-aspartylphosphate intermediate in catalysis. Aspartate 615 and aspartate 619 together coordinate Mg(2+). 5 helical membrane-spanning segments follow: residues 642–662, 689–709, 733–753, 884–904, and 946–966; these read AADIVLTEPGLSTIVTAVIGA, LITVIYDWYFPTILIVIMAVF, ITNIFIMGMVYGLYLTLSTWA, LAFFFAQVGATLFGIFGLGGF, and VIGCGGYVIVAWIWSAIWYVL. The segment covering 994–1010 has biased composition (basic and acidic residues); the sequence is KRSLDRRSKDDIGDKEF. Disordered stretches follow at residues 994–1023 and 1067–1131; these read KRSLDRRSKDDIGDKEFTGPSGMVPANYSN and RRSM…TIRE. A compositionally biased stretch (polar residues) spans 1089–1100; that stretch reads SRTSNTLSTGSK. Basic and acidic residues predominate over residues 1118–1131; it reads IKPDKYDFASTIRE.

Belongs to the cation transport ATPase (P-type) (TC 3.A.3) family. Type IIIA subfamily.

The protein resides in the cell membrane. It carries out the reaction ATP + H2O + H(+)(in) = ADP + phosphate + 2 H(+)(out). Its function is as follows. The plasma membrane ATPase of plants and fungi is a hydrogen ion pump. The proton gradient it generates drives the active transport of nutrients by H(+)-symport. The resulting external acidification and/or internal alkinization may mediate growth responses. The chain is Plasma membrane ATPase (PMA1) from Dunaliella bioculata (Green alga).